Here is a 162-residue protein sequence, read N- to C-terminus: Phenazine biosynthesis protein PhzA1 (162 aa).

The protein belongs to the PhzA/PhzB family.

It participates in antibiotic biosynthesis; phenazine biosynthesis. Functionally, involved in the biosynthesis of the antibiotic phenazine, a nitrogen-containing heterocyclic molecule. PhzA1 (operon phzA1B1C1E1F1G1) has a role in the biosynthesis of the phenazine during planktonic growth. The protein is Phenazine biosynthesis protein PhzA1 of Pseudomonas aeruginosa (strain ATCC 15692 / DSM 22644 / CIP 104116 / JCM 14847 / LMG 12228 / 1C / PRS 101 / PAO1).